The primary structure comprises 635 residues: Bifunctional lysine-specific demethylase and histidyl-hydroxylase NO66 (635 aa).

Disordered regions lie at residues 1–115 and 141–190; these read MSAV…LQNS and FNGE…KANG. Over residues 84 to 99 the composition is skewed to low complexity; that stretch reads ASASDINTSASKNVNA. Polar residues predominate over residues 141-156; that stretch reads FNGESLKNNSNHSTPV. In terms of domain architecture, JmjC spans 295–440; sequence CSIRMLNPQT…DLLELFFPHA (146 aa). Residues His-341, Asp-343, and His-406 each coordinate Fe cation.

It belongs to the ROX family. NO66 subfamily. Fe(2+) serves as cofactor.

It localises to the nucleus. The enzyme catalyses N(6),N(6)-dimethyl-L-lysyl(36)-[histone H3] + 2 2-oxoglutarate + 2 O2 = L-lysyl(36)-[histone H3] + 2 formaldehyde + 2 succinate + 2 CO2. Oxygenase that can act as both a histone lysine demethylase and a ribosomal histidine hydroxylase. Specifically demethylates 'Lys-4' (H3K4me) and 'Lys-36' (H3K36me) of histone H3, thereby playing a central role in histone code. This chain is Bifunctional lysine-specific demethylase and histidyl-hydroxylase NO66, found in Aedes aegypti (Yellowfever mosquito).